The chain runs to 750 residues: E3 ubiquitin-protein ligase rfwd3.S (750 aa).

Residues 92–206 (RQAAEQRSSV…GAAPPAEPAP (115 aa)) form a disordered region. Positions 105-116 (RVQRRSTRRHQR) are enriched in basic residues. Polar residues predominate over residues 122–144 (TAGTSSRAALSNFFQINRTQGVA). The segment covering 168–181 (SSDETVELSEEEEG) has biased composition (acidic residues). The RING-type; degenerate zinc-finger motif lies at 263–307 (CAICFEPWTNAGQHRLSALRCGHLFGFTCIERWLKGGAAKCPQCN). Residues 387-405 (TSMQASSSRSTISGSLSSS) are compositionally biased toward low complexity. A disordered region spans residues 387-406 (TSMQASSSRSTISGSLSSSQ). WD repeat units follow at residues 470–510 (IHSK…VVQT), 512–552 (NTGR…NCVQ), and 558–603 (GSRC…YRPH).

[4Fe-4S] cluster is required as a cofactor.

It is found in the nucleus. The protein resides in the PML body. Its subcellular location is the cytoplasm. The catalysed reaction is S-ubiquitinyl-[E2 ubiquitin-conjugating enzyme]-L-cysteine + [acceptor protein]-L-lysine = [E2 ubiquitin-conjugating enzyme]-L-cysteine + N(6)-ubiquitinyl-[acceptor protein]-L-lysine.. Its pathway is protein modification; protein ubiquitination. Its function is as follows. E3 ubiquitin-protein ligase required for the repair of DNA interstrand cross-links (ICL) in response to DNA damage. Plays a key role in RPA-mediated DNA damage signaling and repair. Required to translesion DNA synthesis across DNA-protein cross-link adducts by catalyzing ubiquitination of proteins on single-stranded DNA (ssDNA). Mediates ubiquitination of the hmces DNA-protein cross-link, possibly promoting its degradation. In Xenopus laevis (African clawed frog), this protein is E3 ubiquitin-protein ligase rfwd3.S (rfwd3.S).